A 587-amino-acid polypeptide reads, in one-letter code: MKRSMYAGRVREEHIGQEITLKGWVGRRRDLGGLIFIDLRDREGIMQLVINPEKVSAEVMATAESLRSEFVIEVTGQVAAREQANDKLPTGAVELNVTALIVLNTAKTTPFEIKDGIEANDDTRLRYRYLDLRRPEMLENLKLRAKVTHSIRNYLDELEFIDVETPFLSKSTPEGARDYLVPSRVNKGHFYALPQSPQITKQLLMNAGFDRYYQIVKCFRDEDLRGDRQPEFTQVDLETSFLTEQEIQDITEGLIARVMKETKGIEVTLPFPRVKYDDAMALYGSDKPDTRFDMLLQDLTEVVKGVDFKVFSEAPAVKAIVVKGAADNYSRKDIDKMTEVAKQYGAKGLAWVKVVDGELNGPVAKFLTGIQEELTTALALEDKDLVLFVADTLEVANATLGALRGRIAKELGLIDNDKFNFLWVVDWPMFEWSEEEGRYMSAHHPFTLPQEETAHELEGDLAKVRAIAYDIVLNGYELGGGSLRINQKDLQERMFKALGFSAEEANDQFGFLLEAMDYGFPPHGGLAIGLDRFVMLLAGEENIREVIAFPKNNKATDPMTQAPSTVALKQLEELSLQVEEDETNKTN.

Glu174 lines the L-aspartate pocket. Residues 198-201 (QITK) are aspartate. An L-aspartate-binding site is contributed by Arg220. ATP is bound by residues 220–222 (RDE) and Gln229. Residue His443 coordinates L-aspartate. Glu477 contacts ATP. Arg484 is a binding site for L-aspartate. An ATP-binding site is contributed by 529–532 (GLDR).

This sequence belongs to the class-II aminoacyl-tRNA synthetase family. Type 1 subfamily. As to quaternary structure, homodimer.

The protein resides in the cytoplasm. The enzyme catalyses tRNA(Asp) + L-aspartate + ATP = L-aspartyl-tRNA(Asp) + AMP + diphosphate. Functionally, catalyzes the attachment of L-aspartate to tRNA(Asp) in a two-step reaction: L-aspartate is first activated by ATP to form Asp-AMP and then transferred to the acceptor end of tRNA(Asp). In Streptococcus pneumoniae (strain 70585), this protein is Aspartate--tRNA ligase.